We begin with the raw amino-acid sequence, 439 residues long: Capsid vertex component 1 (439 aa).

It belongs to the herpesviridae CVC1 protein family. In terms of assembly, interacts (via C-terminus) with capsid vertex component 2/CVC2.

The protein resides in the virion. It localises to the host nucleus. Functionally, capsid vertex-specific component that plays a role during viral DNA encapsidation, assuring correct genome cleavage and presumably stabilizing capsids that contain full-length viral genomes. The sequence is that of Capsid vertex component 1 from Homo sapiens (Human).